Reading from the N-terminus, the 178-residue chain is Peptidyl-prolyl cis-trans isomerase (178 aa).

An N-terminal signal peptide occupies residues 1–17; the sequence is MKLLFFFLVLAVSAAVA. One can recognise a PPIase cyclophilin-type domain in the interval 26–177; sequence FMDIEIDGES…KIAKITDIGL (152 aa).

Belongs to the cyclophilin-type PPIase family. PPIase A subfamily.

It catalyses the reaction [protein]-peptidylproline (omega=180) = [protein]-peptidylproline (omega=0). PPIases accelerate the folding of proteins. It catalyzes the cis-trans isomerization of proline imidic peptide bonds in oligopeptides. Up-regulates interferon gamma production by bovine T-cells. Stimulates high levels of IFN-gamma production by peripheral blood mononuclear cells and T-cells. The IFN-gamma-inducing effect is blocked by cyclosporin A (CsA). This Neospora caninum (Coccidian parasite) protein is Peptidyl-prolyl cis-trans isomerase.